The chain runs to 276 residues: tRNA dimethylallyltransferase (276 aa).

Positions 9–12 (DSLS) are interaction with substrate tRNA.

This sequence belongs to the IPP transferase family. Monomer. It depends on Mg(2+) as a cofactor.

It carries out the reaction adenosine(37) in tRNA + dimethylallyl diphosphate = N(6)-dimethylallyladenosine(37) in tRNA + diphosphate. Its function is as follows. Catalyzes the transfer of a dimethylallyl group onto the adenine at position 37 in tRNAs that read codons beginning with uridine, leading to the formation of N6-(dimethylallyl)adenosine (i(6)A). This Helicobacter pylori (strain G27) protein is tRNA dimethylallyltransferase (miaA).